A 122-amino-acid chain; its full sequence is Large ribosomal subunit protein uL14c (122 aa).

This sequence belongs to the universal ribosomal protein uL14 family. Part of the 50S ribosomal subunit.

The protein resides in the plastid. Its subcellular location is the chloroplast. Its function is as follows. Binds to 23S rRNA. In Chara vulgaris (Common stonewort), this protein is Large ribosomal subunit protein uL14c.